The following is a 161-amino-acid chain: MSSKFLILLAFCGATLVAAEQLPEKFYGTFDLDHSENFDEYLTAKGYGWFTRKLVTFATFKKVFAKNANKNLFDYSNLTSKKDVFYKNVQIGSKFEGEGLDNTKHEVTFTLKDGHLFEHHKPLEEGESKEETYEYYFDGDFLIQKMSFNNIEGRRFYKRLP.

Positions 1-19 (MSSKFLILLAFCGATLVAA) are cleaved as a signal peptide.

It belongs to the calycin superfamily. Fatty-acid binding protein (FABP) family.

The protein resides in the secreted. May play a role in sequestering potentially toxic fatty acids and their peroxidation products, or it may be involved in the maintenance of the impermeable lipid layer of the eggshell. This chain is Fatty acid-binding protein homolog 2 (lbp-2), found in Caenorhabditis elegans.